Consider the following 185-residue polypeptide: Ribosome-recycling factor (185 aa).

This sequence belongs to the RRF family.

The protein localises to the cytoplasm. In terms of biological role, responsible for the release of ribosomes from messenger RNA at the termination of protein biosynthesis. May increase the efficiency of translation by recycling ribosomes from one round of translation to another. This chain is Ribosome-recycling factor, found in Geobacillus thermodenitrificans (strain NG80-2).